A 572-amino-acid chain; its full sequence is Arginine--tRNA ligase (572 aa).

The 'HIGH' region signature appears at 122–132; that stretch reads PNLAKEMHVGH.

Belongs to the class-I aminoacyl-tRNA synthetase family. In terms of assembly, monomer.

The protein localises to the cytoplasm. The catalysed reaction is tRNA(Arg) + L-arginine + ATP = L-arginyl-tRNA(Arg) + AMP + diphosphate. The polypeptide is Arginine--tRNA ligase (Neisseria meningitidis serogroup A / serotype 4A (strain DSM 15465 / Z2491)).